A 450-amino-acid chain; its full sequence is UDP-N-acetylmuramoylalanine--D-glutamate ligase (450 aa).

118-124 (GSNGKTT) serves as a coordination point for ATP.

This sequence belongs to the MurCDEF family.

It localises to the cytoplasm. It catalyses the reaction UDP-N-acetyl-alpha-D-muramoyl-L-alanine + D-glutamate + ATP = UDP-N-acetyl-alpha-D-muramoyl-L-alanyl-D-glutamate + ADP + phosphate + H(+). Its pathway is cell wall biogenesis; peptidoglycan biosynthesis. Cell wall formation. Catalyzes the addition of glutamate to the nucleotide precursor UDP-N-acetylmuramoyl-L-alanine (UMA). The sequence is that of UDP-N-acetylmuramoylalanine--D-glutamate ligase from Halalkalibacterium halodurans (strain ATCC BAA-125 / DSM 18197 / FERM 7344 / JCM 9153 / C-125) (Bacillus halodurans).